The primary structure comprises 325 residues: Ribonucleoside-diphosphate reductase small chain (325 aa).

Positions 74, 105, and 108 each coordinate Fe cation. Tyr112 is a catalytic residue. Glu168, Glu202, and His205 together coordinate Fe cation.

This sequence belongs to the ribonucleoside diphosphate reductase small chain family. Heterodimer of a large and a small chain. It depends on Fe cation as a cofactor.

It carries out the reaction a 2'-deoxyribonucleoside 5'-diphosphate + [thioredoxin]-disulfide + H2O = a ribonucleoside 5'-diphosphate + [thioredoxin]-dithiol. Ribonucleoside-diphosphate reductase holoenzyme provides the precursors necessary for viral DNA synthesis. Allows virus growth in non-dividing cells. Catalyzes the biosynthesis of deoxyribonucleotides from the corresponding ribonucleotides. The protein is Ribonucleoside-diphosphate reductase small chain of Yaba-like disease virus (YLDV).